Consider the following 1141-residue polypeptide: Tetratricopeptide repeat protein 17 (1141 aa).

The stretch at 295-328 (FTSYYTLGNIYAMLGEYNHSVLCYDHALQARPGF) is one TPR 1 repeat. Residues 340-382 (CQQKLEQKLEAQHRSLQRTLNELKEYQKQHDHYLRQQEILEKH) are a coiled coil. TPR repeat units lie at residues 619-652 (WLILNEAGLYWRAVGNSTFAIACLQRALNLAPLQ), 689-722 (PLTFLSLGNAYLALKNISGALEAFRQALKLTTKC), 1014-1048 (SWVLSSMAALYWRVKGQGKKAIDCLRQALHYAPHQ), 1051-1084 (DVPLISLANILHNAKLWNDAVIVATMAVEIAPHF), and 1085-1118 (AVNHFTLGNVYVAMEEFEKALVWYESTLKLQPEF).

This sequence belongs to the TTC17 family. Interacts with CATIP. As to expression, expressed in germ cells as well as in somatic cells of the testis (at protein level).

Its subcellular location is the cytoplasm. It localises to the cell membrane. It is found in the cytoskeleton. In terms of biological role, plays a role in primary ciliogenesis by modulating actin polymerization. This Homo sapiens (Human) protein is Tetratricopeptide repeat protein 17 (TTC17).